We begin with the raw amino-acid sequence, 523 residues long: SWI/SNF and RSC complexes subunit arp9 (523 aa).

A compositionally biased stretch (basic and acidic residues) spans 56 to 72; sequence INMEDPNVKTDETKVET. Disordered stretches follow at residues 56–92 and 319–339; these read INMEDPNVKTDETKVETSESTSEQPSNSNVTEEKNMG and QKEREKNGESEKDEKPDNTDV. The span at 79-92 shows a compositional bias: polar residues; the sequence is QPSNSNVTEEKNMG. Residues 319-336 show a composition bias toward basic and acidic residues; it reads QKEREKNGESEKDEKPDN.

The protein belongs to the actin family. In terms of assembly, component of the RSC complex composed of at least arp9, arp42, rsc1, rsc4, rsc7, rsc9, rsc58, sfh1, snf21, ssr1, ssr2, ssr3 and ssr4. The complex interacts with histone and histone variant components of centromeric chromatin. Component of the SWI/SNF global transcription activator complex composed of at least arp9, arp42, snf5, snf22, snf30, sbf59, sol1, ssr1, ssr2, ssr3, ssr4 and tfg3.

The protein resides in the cytoplasm. It is found in the nucleus. Its function is as follows. Component of the chromatin structure remodeling complex (RSC), which is involved in transcription regulation and nucleosome positioning. Controls particularly membrane and organelle development genes. Part of the SWI/SNF complex, an ATP-dependent chromatin remodeling complex, required for the positive and negative regulation of gene expression of a large number of genes. It changes chromatin structure by altering DNA-histone contacts within a nucleosome, leading eventually to a change in nucleosome position, thus facilitating or repressing binding of gene-specific transcription factors. The protein is SWI/SNF and RSC complexes subunit arp9 (arp9) of Schizosaccharomyces pombe (strain 972 / ATCC 24843) (Fission yeast).